Reading from the N-terminus, the 341-residue chain is Eukaryotic translation initiation factor 2 subunit 1 (341 aa).

In terms of domain architecture, S1 motif spans 18–89 (NELVMVRIES…DKGYIDLSKR (72 aa)). A disordered region spans residues 301-341 (LMEQLEVENQDGDGEEHEDDDDDDDDEEEEEKPKEKKSSRK). Positions 303 to 330 (EQLEVENQDGDGEEHEDDDDDDDDEEEE) are enriched in acidic residues. The span at 331-341 (EKPKEKKSSRK) shows a compositional bias: basic and acidic residues.

The protein belongs to the eIF-2-alpha family. In terms of assembly, eukaryotic translation initiation factor 2 eIF2 is a heterotrimeric complex composed of an alpha, a beta and a gamma subunit.

It localises to the cytoplasm. The protein resides in the cytosol. Functionally, eIF-2 functions in the early steps of protein synthesis by forming a ternary complex with GTP and initiator tRNA. This complex binds to a 40S ribosomal subunit, followed by mRNA binding to form a 43S pre-initiation complex. Junction of the 60S ribosomal subunit to form the 80S initiation complex is preceded by hydrolysis of the GTP bound to eIF-2 and release of an eIF-2-GDP binary complex. In order for eIF-2 to recycle and catalyze another round of initiation, the GDP bound to eIF-2 must exchange with GTP by way of a reaction catalyzed by eIF2B. The protein is Eukaryotic translation initiation factor 2 subunit 1 (eif2s1) of Dictyostelium discoideum (Social amoeba).